The following is a 247-amino-acid chain: Pulmonary surfactant-associated protein A (247 aa).

The N-terminal stretch at 1 to 15 is a signal peptide; it reads MLLLSLALTLISAPA. The Collagen-like domain occupies 27–99; the sequence is GSPGIPGTPG…PGERGPPGLP (73 aa). 4-hydroxyproline occurs at positions 29, 32, 35, 41, 53, 56, 62, 66, and 69. A disordered region spans residues 30 to 100; sequence GIPGTPGSHG…GERGPPGLPA (71 aa). Over residues 41–50 the composition is skewed to basic and acidic residues; the sequence is PGRDGRDGVK. Pro residues predominate over residues 53 to 64; it reads PGPPGPMGPPGG. The span at 83 to 92 shows a compositional bias: basic and acidic residues; that stretch reads ERGDKGEPGE. Residues 132 to 247 form the C-type lectin domain; that stretch reads AVGEKIFSTN…LQYRLVICEF (116 aa). Disulfide bonds link cysteine 154/cysteine 245 and cysteine 223/cysteine 237. Asparagine 206 is a glycosylation site (N-linked (GlcNAc...) asparagine). Glutamate 214, arginine 216, asparagine 233, and aspartate 234 together coordinate Ca(2+).

Belongs to the SFTPA family. As to quaternary structure, oligomeric complex of 6 set of homotrimers.

Its subcellular location is the secreted. It is found in the extracellular space. The protein localises to the extracellular matrix. It localises to the surface film. Functionally, in presence of calcium ions, it binds to surfactant phospholipids and contributes to lower the surface tension at the air-liquid interface in the alveoli of the mammalian lung and is essential for normal respiration. Enhances the expression of MYO18A/SP-R210 on alveolar macrophages. The sequence is that of Pulmonary surfactant-associated protein A (SFTPA1) from Oryctolagus cuniculus (Rabbit).